The chain runs to 236 residues: Thiamine-phosphate synthase (236 aa).

Residues Gln57–Lys61 and Asn89 each bind 4-amino-2-methyl-5-(diphosphooxymethyl)pyrimidine. Mg(2+) contacts are provided by Asp90 and Asp109. Ser128 provides a ligand contact to 4-amino-2-methyl-5-(diphosphooxymethyl)pyrimidine. Residue Thr154–Ser156 coordinates 2-[(2R,5Z)-2-carboxy-4-methylthiazol-5(2H)-ylidene]ethyl phosphate. 4-amino-2-methyl-5-(diphosphooxymethyl)pyrimidine is bound at residue Lys157. 2-[(2R,5Z)-2-carboxy-4-methylthiazol-5(2H)-ylidene]ethyl phosphate is bound by residues Gly185 and Ile205–Ser206.

It belongs to the thiamine-phosphate synthase family. Mg(2+) serves as cofactor.

It carries out the reaction 2-[(2R,5Z)-2-carboxy-4-methylthiazol-5(2H)-ylidene]ethyl phosphate + 4-amino-2-methyl-5-(diphosphooxymethyl)pyrimidine + 2 H(+) = thiamine phosphate + CO2 + diphosphate. The catalysed reaction is 2-(2-carboxy-4-methylthiazol-5-yl)ethyl phosphate + 4-amino-2-methyl-5-(diphosphooxymethyl)pyrimidine + 2 H(+) = thiamine phosphate + CO2 + diphosphate. It catalyses the reaction 4-methyl-5-(2-phosphooxyethyl)-thiazole + 4-amino-2-methyl-5-(diphosphooxymethyl)pyrimidine + H(+) = thiamine phosphate + diphosphate. It participates in cofactor biosynthesis; thiamine diphosphate biosynthesis; thiamine phosphate from 4-amino-2-methyl-5-diphosphomethylpyrimidine and 4-methyl-5-(2-phosphoethyl)-thiazole: step 1/1. In terms of biological role, condenses 4-methyl-5-(beta-hydroxyethyl)thiazole monophosphate (THZ-P) and 2-methyl-4-amino-5-hydroxymethyl pyrimidine pyrophosphate (HMP-PP) to form thiamine monophosphate (TMP). This is Thiamine-phosphate synthase from Roseiflexus sp. (strain RS-1).